We begin with the raw amino-acid sequence, 1032 residues long: Structural polyprotein (1032 aa).

Residue D23 coordinates a divalent metal cation. One can recognise a Peptidase S50 domain in the interval 501 to 723; it reads ADSPLGEEHW…QTLPHWTAGS (223 aa). Residue S627 is the Nucleophile of the active site. Residue K670 is part of the active site. The segment at 986 to 1014 is disordered; it reads LVNQPATAPRVPPRRIVSAQTAQTDPPGR. Residues 1021-1030 are interaction with VP1 protein; sequence LRRVRGEDND.

In terms of assembly, homotrimer. A central divalent metal stabilizes the VP2 trimer. As to quaternary structure, homodimer. Interacts (via C-terminus) with VP1 in the cytoplasm. Capsid VP3 interacts with VP2. Specific enzymatic cleavages yield mature proteins. The capsid assembly seems to be regulated by polyprotein processing. The protease VP4 cleaves itself off the polyprotein, thus releasing pre-VP2 and VP3 within the infected cell. During capsid assembly, the C-terminus of pre-VP2 is further processed by VP4, giving rise to VP2, the external capsid protein and three small peptides that all stay closely associated with the capsid.

The protein resides in the virion. It localises to the host cytoplasm. Its function is as follows. Capsid protein VP2 self assembles to form an icosahedral capsid with a T=13 symmetry, about 70 nm in diameter, and consisting of 260 VP2 trimers. The capsid encapsulates the genomic dsRNA. VP2 is also involved in attachment and entry into the host cell. Functionally, the precursor of VP2 plays an important role in capsid assembly. First, pre-VP2 and VP2 oligomers assemble to form a procapsid. Then, the pre-VP2 intermediates may be processed into VP2 proteins by proteolytic cleavage mediated by VP4 to obtain the mature virion. The final capsid is composed of pentamers and hexamers but VP2 has a natural tendency to assemble into all-pentameric structures. Therefore pre-VP2 may be required to allow formation of the hexameric structures. Protease VP4 is a serine protease that cleaves the polyprotein into its final products. Pre-VP2 is first partially cleaved, and may be completely processed by VP4 upon capsid maturation. In terms of biological role, capsid protein VP3 plays a key role in virion assembly by providing a scaffold for the capsid made of VP2. May self-assemble to form a T=4-like icosahedral inner-capsid composed of at least 180 trimers. Plays a role in genomic RNA packaging by recruiting VP1 into the capsid and interacting with the dsRNA genome segments to form a ribonucleoprotein complex. Additionally, the interaction of the VP3 C-terminal tail with VP1 removes the inherent structural blockade of the polymerase active site. Thus, VP3 can also function as a transcriptional activator. Its function is as follows. Structural peptide 1 is a small peptide derived from pre-VP2 C-terminus. It destabilizes and perforates cell membranes, suggesting a role during entry. Functionally, structural peptide 2 is a small peptide derived from pre-VP2 C-terminus. It is not essential for the virus viability, but viral growth is affected when missing. Structural peptide 3 is a small peptide derived from pre-VP2 C-terminus. It is not essential for the virus viability, but viral growth is affected when missing. The protein is Structural polyprotein of Drosophila melanogaster (Fruit fly).